The following is a 401-amino-acid chain: MRINSELANKFSASTVHLEHITTALSCLTPFGSKDDVLIFIDADGLSFVRENNHVIKIQLLLSRELFMSYSYRNETEDHMKLCVKINHILDSVSVMNRNSDDIVECTLSYDGHGSPFVLIFEDSFISERVEYSTYLIKDFDTNGLELDRERISFEAIIKGEALHSALKDLKEIGCKECYVYAKTEANDENVFALISKSQLGFSKIKLPSNRSILEKLQVFDGDSTTVIDGFAVIGFFDFTSFDKIRKSTKIASKVLFRMDVHGVLSVNILSQTDDVIITDTTRPSNNRPGSIRQLQLPKDYPGIVIEVCMLEKESIDEAAQTEIELLMETNELGNRNSFKKSTIRKRYGTDKGNETSNDNLLQLNGKKIKLPSEEENNKNRESEDEENHCKYPTKDIPIFF.

Positions 367-393 (KKIKLPSEEENNKNRESEDEENHCKYP) are disordered. Positions 371-393 (LPSEEENNKNRESEDEENHCKYP) are enriched in basic and acidic residues. The residue at position 383 (serine 383) is a Phosphoserine.

The protein belongs to the rad1 family. Component of the checkpoint clamp complex composed of DDC1, MEC3 and RAD17. The interaction with MEC3 is performed in a RAD17-dependent manner. The checkpoint clamp complex loads onto DNA. Interacts with the DNA polymerase zeta subunit REV7. 2 RAD17 subunits also form a heterotrimer with one MEC3 subunit.

It localises to the nucleus. Functionally, component of the checkpoint clamp complex involved in the surveillance mechanism that allows the DNA repair pathways to act to restore the integrity of the DNA prior to DNA synthesis or separation of the replicated chromosomes. Associates with sites of DNA damage and modulates the MEC1 signaling pathway and the activation of RAD53 in response to DNA damage at phase G1. The complex also physically regulates DNA polymerase zeta-dependent mutagenesis by controlling the access of polymerase zeta to damaged DNA. Contrary to its human counterpart, the 9-1-1 complex, the checkpoint clamp complex shows no detectable exonuclease activity. This Saccharomyces cerevisiae (strain ATCC 204508 / S288c) (Baker's yeast) protein is DNA damage checkpoint control protein RAD17 (RAD17).